The following is a 112-amino-acid chain: ATP synthase subunit c (112 aa).

2 helical membrane passes run 36–56 (FSVLAAGLGLGVAALGGAIGM) and 81–101 (MFIALAMIEAQVIYALVIALI).

Belongs to the ATPase C chain family. As to quaternary structure, F-type ATPases have 2 components, F(1) - the catalytic core - and F(0) - the membrane proton channel. F(1) has five subunits: alpha(3), beta(3), gamma(1), delta(1), epsilon(1). F(0) has three main subunits: a(1), b(2) and c(10-14). The alpha and beta chains form an alternating ring which encloses part of the gamma chain. F(1) is attached to F(0) by a central stalk formed by the gamma and epsilon chains, while a peripheral stalk is formed by the delta and b chains.

It localises to the cell inner membrane. F(1)F(0) ATP synthase produces ATP from ADP in the presence of a proton or sodium gradient. F-type ATPases consist of two structural domains, F(1) containing the extramembraneous catalytic core and F(0) containing the membrane proton channel, linked together by a central stalk and a peripheral stalk. During catalysis, ATP synthesis in the catalytic domain of F(1) is coupled via a rotary mechanism of the central stalk subunits to proton translocation. Functionally, key component of the F(0) channel; it plays a direct role in translocation across the membrane. A homomeric c-ring of between 10-14 subunits forms the central stalk rotor element with the F(1) delta and epsilon subunits. The sequence is that of ATP synthase subunit c from Campylobacter jejuni subsp. jejuni serotype O:6 (strain 81116 / NCTC 11828).